We begin with the raw amino-acid sequence, 247 residues long: Carboxy-S-adenosyl-L-methionine synthase (247 aa).

S-adenosyl-L-methionine is bound by residues Y40, 65–67, 90–91, 122–123, N137, and R204; these read GSS, DN, and DI.

This sequence belongs to the class I-like SAM-binding methyltransferase superfamily. Cx-SAM synthase family. As to quaternary structure, homodimer.

The catalysed reaction is prephenate + S-adenosyl-L-methionine = carboxy-S-adenosyl-L-methionine + 3-phenylpyruvate + H2O. In terms of biological role, catalyzes the conversion of S-adenosyl-L-methionine (SAM) to carboxy-S-adenosyl-L-methionine (Cx-SAM). The sequence is that of Carboxy-S-adenosyl-L-methionine synthase from Pseudomonas fluorescens (strain SBW25).